We begin with the raw amino-acid sequence, 415 residues long: MSLQAPKGTKDLLPTESYKWQYLENKFRNIAADFGCREIRTPVFEYTELFQRGVGETTDVVQKEMYTFEDKAGRSITLKPEGTSPAVRAFVEGRLFNETQPTKMYYFTPVMRYENVQKGRLRQHHQFGIEIFGAKEASVDAEVISIPVRIYKELGVEGVELNINSIGCPKCRKTYNEALKKYLSKNYDKLCSTCKTRFDKNPLRILDCKVDTCKEIVKDAPIILDYICGECKEHFESLKNYLDVLNINYKIDPFIVRGLDYYSKTVFEFITDDITICAGGRYDYLIEEIGGPSMPAVGFGMGMERLLLTLQEKAIEIPEEAYVDLYLGNMGDKAKLEVLKLAKELRDRHIKCEIDHMGKSVKAQMKYANRIGAKYSMVLGEEELNTGKATIKKMEDGQQIEVDIKDIDTLIKVFK.

This sequence belongs to the class-II aminoacyl-tRNA synthetase family. In terms of assembly, homodimer.

The protein resides in the cytoplasm. It carries out the reaction tRNA(His) + L-histidine + ATP = L-histidyl-tRNA(His) + AMP + diphosphate + H(+). The sequence is that of Histidine--tRNA ligase from Clostridium botulinum (strain 657 / Type Ba4).